Consider the following 312-residue polypeptide: MRHNQMCCETPPTVTVHVKSGSNRSHQTRKPVSLKRPILKDSWQASEKNAHNNKPKRPRGPCLIIQRQEMTAFFKLFDDDLIQDFLWMDCCCKIADKYLLAMTFVYFKRAKFTISEHTRINFFIALYLANTVEEDEEEAKYEIFPWALGKNWRKLFPNFLKLRDQLWDRIDYRAIVSRRCCEEVMAIAPSHYIWQRERSVHHSGAARNYNRDEVHLPRGPSATPVDCSLCGKKGRYVRLGLSSSSSSSSDIVELTGKRSQELHNSLSMDMIGDPSQANTYSQVANDHQSKKENETNFVKKTKSMGWFAESEE.

The interval 67-199 (RQEMTAFFKL…SHYIWQRERS (133 aa)) is speedy/Ringo box; Required for CDK-binding. Ser-221 is subject to Phosphoserine. Thr-223 is subject to Phosphothreonine.

It belongs to the Speedy/Ringo family. In terms of assembly, interacts with CDK1. Interacts with CDK2. May interact with CDKN1B/KIP1. Identified in a complex with CDK2 and CDKN1B/KIP1, where it interacts primarily with CDK2.

It localises to the nucleus. In terms of biological role, regulates the G1/S phase transition of the cell cycle by binding and activating CDK1 and CDK2. Contributes to CDK2 activation without promoting CDK2 phosphorylation, by inducing a conformation change of the CDK2 T-loop that obstructs the substrate-binding cleft prior to kinase activation. Interferes with CDKN1B-mediated inhibition of CDK2. Mediates cell survival during the DNA damage process through activation of CDK2. This chain is Speedy protein A, found in Rattus norvegicus (Rat).